A 267-amino-acid chain; its full sequence is 2-keto-3-deoxy-L-rhamnonate aldolase (267 aa).

Histidine 49 acts as the Proton acceptor in catalysis. Residue glutamine 151 coordinates substrate. Glutamate 153 is a Mg(2+) binding site. The substrate site is built by alanine 178 and aspartate 179. Aspartate 179 contacts Mg(2+).

Belongs to the HpcH/HpaI aldolase family. KDR aldolase subfamily. As to quaternary structure, homohexamer. It depends on Mg(2+) as a cofactor.

The catalysed reaction is 2-dehydro-3-deoxy-L-rhamnonate = (S)-lactaldehyde + pyruvate. Its function is as follows. Catalyzes the reversible retro-aldol cleavage of 2-keto-3-deoxy-L-rhamnonate (KDR) to pyruvate and lactaldehyde. The polypeptide is 2-keto-3-deoxy-L-rhamnonate aldolase (Escherichia coli O157:H7).